The following is a 100-amino-acid chain: MTLFSSISSMSTSMSGSKSSIASFGSGTSMSSNSIACGGGCGGSGGILGSGLGLGLGLGLDLTGGSRSRGSCGGNRGNGNGNGGMGGGNGSCCGGPCCGI.

Disordered regions lie at residues 1 to 29 (MTLF…SGTS) and 67 to 100 (RSRG…CCGI). Residues 71–93 (SCGGNRGNGNGNGGMGGGNGSCC) are compositionally biased toward gly residues.

Belongs to the hssA/B family.

The sequence is that of HssA/B-like protein 37 (hssl37) from Dictyostelium discoideum (Social amoeba).